Reading from the N-terminus, the 670-residue chain is Extracellular matrix protein 2 (670 aa).

The signal sequence occupies residues 1 to 19; sequence MKLAVLFCFILLIVLQTDC. In terms of domain architecture, VWFC spans 96 to 153; sequence GYCFVKGMIMYNKAVWSPEPCTTCLCSNGRVLCDETECHPKACPYTIKPEGECCPICS. Residues 185–270 form a disordered region; the sequence is SEEDEEIAEG…EEDAIRGDVF (86 aa). Over residues 192-227 the composition is skewed to basic and acidic residues; sequence AEGHKEHKKETSVPTKIHGDGERTERKLRPEKEGRS. Residues 241 to 263 show a composition bias toward acidic residues; the sequence is ESKEETEREGEEEEEEEEEEEED. Positions 266-268 match the Cell attachment site motif; sequence RGD. In terms of domain architecture, LRRNT spans 278-315; the sequence is PGTPRGRPRLPRSCSLSYRTISCVHADFTEIPPITAPE. 13 LRR repeats span residues 339 to 359, 365 to 386, 387 to 407, 410 to 430, 436 to 456, 457 to 478, 481 to 501, 507 to 528, 529 to 549, 553 to 573, 580 to 601, 603 to 624, and 632 to 655; these read NLER…GPKA, KLMR…LPST, LEEL…SLSD, QLVT…DPLA, SLSY…GLPA, STEE…CFNH, KITM…APLA, NLES…LPKS, LLHL…VFGH, GLEY…DLVS, SLRE…IQDM, ALHF…QICN, and ALEH…AFSC. Asn-349 carries an N-linked (GlcNAc...) asparagine glycan. N-linked (GlcNAc...) asparagine glycosylation occurs at Asn-420. Residue Asn-477 is glycosylated (N-linked (GlcNAc...) asparagine).

The protein belongs to the small leucine-rich proteoglycan (SLRP) family. SLRP class I subfamily. As to quaternary structure, interacts with numerous extracellular matrix proteins. Interacts with isoform 1 of MSL1. Interacts with isoform 3 of RASSF1.

It localises to the secreted. Its subcellular location is the extracellular space. It is found in the extracellular matrix. In terms of biological role, promotes matrix assembly and cell adhesiveness. The sequence is that of Extracellular matrix protein 2 (Ecm2) from Mus musculus (Mouse).